Here is a 734-residue protein sequence, read N- to C-terminus: Photosystem I P700 chlorophyll a apoprotein A2 (734 aa).

8 consecutive transmembrane segments (helical) span residues 46–69, 135–158, 175–199, 273–291, 330–353, 369–395, 417–439, and 517–535; these read IFAS…FHVA, LYQG…LHLQ, LNHH…HVAI, IAHH…GHQY, LHFQ…QHMY, AALY…IFFI, AIIS…LYVH, and FLVH…LILV. Residues cysteine 559 and cysteine 568 each contribute to the [4Fe-4S] cluster site. 2 consecutive transmembrane segments (helical) span residues 575–596 and 643–665; these read AFYL…YWHW and LSVW…MFLI. Positions 654, 662, and 670 each coordinate chlorophyll a. Tryptophan 671 is a binding site for phylloquinone. A helical membrane pass occupies residues 707–727; it reads LVGLAHFSVGYIFTYAAFLIA.

It belongs to the PsaA/PsaB family. As to quaternary structure, the PsaA/B heterodimer binds the P700 chlorophyll special pair and subsequent electron acceptors. PSI consists of a core antenna complex that captures photons, and an electron transfer chain that converts photonic excitation into a charge separation. The eukaryotic PSI reaction center is composed of at least 11 subunits. It depends on P700 is a chlorophyll a/chlorophyll a' dimer, A0 is one or more chlorophyll a, A1 is one or both phylloquinones and FX is a shared 4Fe-4S iron-sulfur center. as a cofactor.

The protein resides in the plastid. Its subcellular location is the chloroplast thylakoid membrane. It catalyses the reaction reduced [plastocyanin] + hnu + oxidized [2Fe-2S]-[ferredoxin] = oxidized [plastocyanin] + reduced [2Fe-2S]-[ferredoxin]. Its function is as follows. PsaA and PsaB bind P700, the primary electron donor of photosystem I (PSI), as well as the electron acceptors A0, A1 and FX. PSI is a plastocyanin-ferredoxin oxidoreductase, converting photonic excitation into a charge separation, which transfers an electron from the donor P700 chlorophyll pair to the spectroscopically characterized acceptors A0, A1, FX, FA and FB in turn. Oxidized P700 is reduced on the lumenal side of the thylakoid membrane by plastocyanin. In Chaetosphaeridium globosum (Charophycean green alga), this protein is Photosystem I P700 chlorophyll a apoprotein A2.